A 183-amino-acid polypeptide reads, in one-letter code: MNKLIPVPREFFARDTNVVSTELIGKALYFQGKTAIITETESYIGQNDPACHAARGRTKRTDIMFGPAGFSYVYLIYGMYYCLNFVTEAKGFPAATLIRGVHVILPENLYLNGPGKLCKYLGINISHNKCDLINNNEFFVGDIGLKLPYSTTARIGITKGTDKLWRYVVTDITNLISQYNVQP.

Belongs to the DNA glycosylase MPG family.

The sequence is that of Putative 3-methyladenine DNA glycosylase from Rickettsia conorii (strain ATCC VR-613 / Malish 7).